The primary structure comprises 313 residues: Fe-S cluster assembly protein dre2 (313 aa).

Disordered stretches follow at residues 1 to 25 and 151 to 187; these read MSIT…SQKR and GRKK…AQNN. Residues 20 to 145 are N-terminal SAM-like domain; it reads NGSQKRNLLL…FEKPVQEAAV (126 aa). A linker region spans residues 146–203; it reads PLKLGGRKKKDKTNGVNGVQNGVATNGASTNGVGMFDPAQNNDDELIDEDALLSDDDL. Positions 159 to 177 are enriched in polar residues; that stretch reads NGVNGVQNGVATNGASTNG. The [2Fe-2S] cluster site is built by Cys213, Cys225, Cys228, and Cys230. A fe-S binding site A region spans residues 213–230; it reads CVPETAKKRRRPCKDCTC. [4Fe-4S] cluster is bound by residues Cys276, Cys279, Cys287, and Cys290. 2 short sequence motifs (cx2C motif) span residues 276 to 279 and 287 to 290; these read CNSC and CSSC. Positions 276-290 are fe-S binding site B; it reads CNSCSLGDAFRCSSC.

Belongs to the anamorsin family. In terms of assembly, monomer. Interacts with tah18. Interacts with mia40. It depends on [2Fe-2S] cluster as a cofactor. Requires [4Fe-4S] cluster as cofactor.

The protein resides in the cytoplasm. It localises to the mitochondrion intermembrane space. In terms of biological role, component of the cytosolic iron-sulfur (Fe-S) protein assembly (CIA) machinery required for the maturation of extramitochondrial Fe-S proteins. Part of an electron transfer chain functioning in an early step of cytosolic Fe-S biogenesis, facilitating the de novo assembly of a [4Fe-4S] cluster on the scaffold complex cfd1-nbp35. Electrons are transferred to dre2 from NADPH via the FAD- and FMN-containing protein tah18. Tah18-dre2 are also required for the assembly of the diferric tyrosyl radical cofactor of ribonucleotide reductase (RNR), probably by providing electrons for reduction during radical cofactor maturation in the catalytic small subunit rnr2. This is Fe-S cluster assembly protein dre2 from Aspergillus flavus (strain ATCC 200026 / FGSC A1120 / IAM 13836 / NRRL 3357 / JCM 12722 / SRRC 167).